The following is a 248-amino-acid chain: ATP synthase subunit a, chloroplastic (248 aa).

5 consecutive transmembrane segments (helical) span residues 39–59 (QVLI…ILAV), 96–116 (VPFI…GALF), 135–155 (INTT…AGLT), 200–220 (LVVV…VMFL), and 221–241 (GLFT…AYIG).

This sequence belongs to the ATPase A chain family. F-type ATPases have 2 components, CF(1) - the catalytic core - and CF(0) - the membrane proton channel. CF(1) has five subunits: alpha(3), beta(3), gamma(1), delta(1), epsilon(1). CF(0) has four main subunits: a, b, b' and c.

The protein resides in the plastid. It localises to the chloroplast thylakoid membrane. Key component of the proton channel; it plays a direct role in the translocation of protons across the membrane. This is ATP synthase subunit a, chloroplastic from Pelargonium hortorum (Common geranium).